Reading from the N-terminus, the 372-residue chain is Ligninase C (372 aa).

An N-terminal signal peptide occupies residues 1-26 (MAFKSLLSFVSVIGALQGANAALTRR). Histidine 74 functions as the Proton acceptor in the catalytic mechanism. Residues aspartate 75, glycine 93, aspartate 95, and serine 97 each contribute to the Ca(2+) site. A glycan (N-linked (GlcNAc...) asparagine) is linked at asparagine 129. Histidine 205 contributes to the heme b binding site. Threonine 206, aspartate 223, threonine 225, leucine 228, and aspartate 230 together coordinate Ca(2+). A disordered region spans residues 346–372 (TPFPTFPTDPGPKTAVAPVPKPPAARK).

It belongs to the peroxidase family. Ligninase subfamily. The cofactor is Ca(2+). Requires heme b as cofactor.

It carries out the reaction 1-(3,4-dimethoxyphenyl)-2-(2-methoxyphenoxy)propane-1,3-diol + H2O2 = 3,4-dimethoxybenzaldehyde + guaiacol + glycolaldehyde + H2O. The catalysed reaction is 2 (3,4-dimethoxyphenyl)methanol + H2O2 = 2 (3,4-dimethoxyphenyl)methanol radical + 2 H2O. It participates in secondary metabolite metabolism; lignin degradation. Depolymerization of lignin. Catalyzes the C(alpha)-C(beta) cleavage of the propyl side chains of lignin. The chain is Ligninase C from Trametes versicolor (White-rot fungus).